An 822-amino-acid chain; its full sequence is SKI/DACH domain-containing protein 1 (822 aa).

The span at H245–A261 shows a compositional bias: basic residues. A disordered region spans residues H245 to V370. Over residues P278–S318 the composition is skewed to low complexity. Acidic residues predominate over residues S319–G338. A Glycyl lysine isopeptide (Lys-Gly) (interchain with G-Cter in SUMO2) cross-link involves residue K602. Disordered stretches follow at residues E658–S677 and L706–G732. The segment covering P660–L675 has biased composition (polar residues).

Belongs to the DACH/dachshund family.

The protein is SKI/DACH domain-containing protein 1 (Skida1) of Mus musculus (Mouse).